Here is a 1269-residue protein sequence, read N- to C-terminus: DNA-directed RNA polymerase subunit beta (1269 aa).

The protein belongs to the RNA polymerase beta chain family. As to quaternary structure, the RNAP catalytic core consists of 2 alpha, 1 beta, 1 beta' and 1 omega subunit. When a sigma factor is associated with the core the holoenzyme is formed, which can initiate transcription.

The enzyme catalyses RNA(n) + a ribonucleoside 5'-triphosphate = RNA(n+1) + diphosphate. Functionally, DNA-dependent RNA polymerase catalyzes the transcription of DNA into RNA using the four ribonucleoside triphosphates as substrates. This Porphyromonas gingivalis (strain ATCC 33277 / DSM 20709 / CIP 103683 / JCM 12257 / NCTC 11834 / 2561) protein is DNA-directed RNA polymerase subunit beta.